A 126-amino-acid polypeptide reads, in one-letter code: Methylglyoxal synthase (126 aa).

Residues 1-126 enclose the MGS-like domain; it reads MAGSKCLALI…AIKLLPTLEA (126 aa). Substrate contacts are provided by residues H12, K16, 38 to 41, and 59 to 60; these read TGTT and SG. D65 functions as the Proton donor/acceptor in the catalytic mechanism. H92 lines the substrate pocket.

This sequence belongs to the methylglyoxal synthase family.

It carries out the reaction dihydroxyacetone phosphate = methylglyoxal + phosphate. Its function is as follows. Catalyzes the formation of methylglyoxal from dihydroxyacetone phosphate. The polypeptide is Methylglyoxal synthase (Rhizobium etli (strain ATCC 51251 / DSM 11541 / JCM 21823 / NBRC 15573 / CFN 42)).